The primary structure comprises 689 residues: MSEKTFLVEIGTEELPPKALRSLAESFAANFTAELDNAGLAHGTVQWFAAPRRLALKVANLAEAQPDREIEKRGPAIAQAFDAEGKPSKAAEGWARGCGITVDQAERLTTDKGEWLLYRAHVKGESTEALLPNMVATSLAKLPIPKLMRWGASDVHFVRPVHTVTLLLGDKVIPATILGIQSDRVIRGHRFMGEPEFAIDNADQYPEILRERGKVIADYEERKAKIKADAEEAARKIGGNADLSESLLEEVASLVEWPVVLTAKFEEKFLAVPSEALVYTMKGDQKYFPVYANDGKLLPNFIFVANIESKDQQQIISGNEKVVRPRLADAEFFFNTDRKKRLEDNLPRLQTVLFQLQLGTLRDKTDRIQALAGWIAEQIGADVNHATRAGLLSKCDLMTNMVFEFTDTQGVMGMHYARHDGEAEDVAVALNEQYQPRFAGDDLPSNPVACALAIADKMDTLAGIFGIGQHPKGDKDPFALRRAALGVLRIIVEKNLNLDLQTLTEEAVRLYGDKLTNANVVDDVIDFMLGRFRAWYQDEGYTVDTIQAVLARRPTRPADFDARMKAVSHFRTLEAAAALAAANKRVSNILAKSDEVLSDRVNASTLKEPEEIKLAMQVVVLRDKLEPYFAEGRYQDALVELAELREPVDAFFDKVMVMVDDKELRINRLTMLEKLRELFLRVADISLLQ.

The protein belongs to the class-II aminoacyl-tRNA synthetase family. As to quaternary structure, tetramer of two alpha and two beta subunits.

The protein resides in the cytoplasm. It catalyses the reaction tRNA(Gly) + glycine + ATP = glycyl-tRNA(Gly) + AMP + diphosphate. This is Glycine--tRNA ligase beta subunit from Shigella dysenteriae serotype 1 (strain Sd197).